The primary structure comprises 352 residues: Glycerol-1-phosphate dehydrogenase [NAD(P)+] (352 aa).

NAD(+) is bound by residues 98–102 and 120–123; these read GKPID and TAAS. Substrate is bound at residue Asp125. Ser129 is a binding site for NAD(+). Substrate is bound at residue Asp172. Residues Asp172 and His252 each contribute to the Zn(2+) site. His256 is a substrate binding site. His268 provides a ligand contact to Zn(2+).

It belongs to the glycerol-1-phosphate dehydrogenase family. The cofactor is Zn(2+).

Its subcellular location is the cytoplasm. It catalyses the reaction sn-glycerol 1-phosphate + NAD(+) = dihydroxyacetone phosphate + NADH + H(+). The enzyme catalyses sn-glycerol 1-phosphate + NADP(+) = dihydroxyacetone phosphate + NADPH + H(+). It participates in membrane lipid metabolism; glycerophospholipid metabolism. In terms of biological role, catalyzes the NAD(P)H-dependent reduction of dihydroxyacetonephosphate (DHAP or glycerone phosphate) to glycerol 1-phosphate (G1P). The G1P thus generated is used as the glycerophosphate backbone of phospholipids in the cellular membranes of Archaea. The chain is Glycerol-1-phosphate dehydrogenase [NAD(P)+] from Natronomonas pharaonis (strain ATCC 35678 / DSM 2160 / CIP 103997 / JCM 8858 / NBRC 14720 / NCIMB 2260 / Gabara) (Halobacterium pharaonis).